Reading from the N-terminus, the 446-residue chain is Probable beta-1,4-xylosyltransferase IRX9L (446 aa).

Positions methionine 1–serine 26 are disordered. At methionine 1 to arginine 85 the chain is on the cytoplasmic side. Residues alanine 86 to phenylalanine 106 traverse the membrane as a helical; Signal-anchor for type II membrane protein segment. Topologically, residues serine 107–threonine 446 are lumenal. N-linked (GlcNAc...) asparagine glycans are attached at residues asparagine 185, asparagine 258, asparagine 361, and asparagine 411.

The protein belongs to the glycosyltransferase 43 family.

It localises to the golgi apparatus membrane. Its function is as follows. Probable beta-1,4-xylosyltransferase involved in xylan biosynthesis in cell walls. The chain is Probable beta-1,4-xylosyltransferase IRX9L from Oryza sativa subsp. japonica (Rice).